We begin with the raw amino-acid sequence, 330 residues long: GDP-mannose transporter (330 aa).

Over 1–13 (MSQLKVDNGPLSH) the chain is Cytoplasmic. The helical transmembrane segment at 14-34 (VANSGPISIGAYCFSSIMMTV) threads the bilayer. The Lumenal portion of the chain corresponds to 35 to 48 (TNKFVVNLKGFNMN). Residues 49–69 (FVMLFVQAAVCVNLLFFLRLL) traverse the membrane as a helical segment. The Cytoplasmic segment spans residues 70 to 81 (GYAKFRPLNRTD). A helical transmembrane segment spans residues 82 to 98 (AKNWFPITIFLVLMIYT). The Lumenal portion of the chain corresponds to 99–104 (SSKSLQ). A helical membrane pass occupies residues 105–124 (YLAVPIYTIFKNLTIILIAY). Residues 125-138 (GEVLFFGGSVTAME) lie on the Cytoplasmic side of the membrane. A helical membrane pass occupies residues 139 to 155 (LSSFLLMVLSSVVATLG). The Lumenal portion of the chain corresponds to 156 to 170 (DQQALKKTADAGASL). Residues 171 to 191 (FNIGYMWMFINCLSSAAFVLV) traverse the membrane as a helical segment. The Cytoplasmic portion of the chain corresponds to 192 to 203 (MRKRIKLTNFKD). The chain crosses the membrane as a helical span at residues 204–224 (FDTMFYNNILSMPVLLALSFL). Topologically, residues 225–241 (MEDWSTENLTKNLSRDS) are lumenal. The chain crosses the membrane as a helical span at residues 242–262 (VTAMIISGMTAVCISYCSGWC). The Cytoplasmic portion of the chain corresponds to 263–269 (VRVTSST). A helical membrane pass occupies residues 270–290 (TYSMVGALNKLPIALSGLIFF). Residues 291-294 (DAPK) lie on the Lumenal side of the membrane. Residues 295–315 (NFLSIFSIFLGFLSGIVYAVA) form a helical membrane-spanning segment. Residues 316–330 (KQKKQQNPQPSAPIK) lie on the Cytoplasmic side of the membrane.

Belongs to the TPT transporter family. SLC35D subfamily. Homooligomer.

Its subcellular location is the golgi apparatus membrane. The protein localises to the cytoplasmic vesicle membrane. It is found in the endoplasmic reticulum membrane. Involved in the import of GDP-mannose from the cytoplasm into the Golgi lumen. The polypeptide is GDP-mannose transporter (VRG4) (Kluyveromyces lactis (strain ATCC 8585 / CBS 2359 / DSM 70799 / NBRC 1267 / NRRL Y-1140 / WM37) (Yeast)).